The sequence spans 476 residues: Serine/threonine-protein kinase Chk1 (476 aa).

An interaction with CLSPN region spans residues M1–Y265. Positions W9 to Y265 constitute a Protein kinase domain. Residues L15 to V23 and K38 each bind ATP. Residue D130 is the Proton acceptor of the active site. Residue K132 forms a Glycyl lysine isopeptide (Lys-Gly) (interchain with G-Cter in ubiquitin) linkage. A disordered region spans residues K267 to D329. At S280 the chain carries Phosphoserine; by PKB/AKT1. Positions S280–S291 are enriched in low complexity. A phosphoserine mark is found at S286, S296, and S301. The span at L298–E320 shows a compositional bias: polar residues. S317 and S345 each carry phosphoserine; by ATM and ATR. Residues Q391–T476 are autoinhibitory region. A Glycyl lysine isopeptide (Lys-Gly) (interchain with G-Cter in ubiquitin) cross-link involves residue K436. Residues S463, S467, and S468 each carry the phosphoserine modification.

The protein belongs to the protein kinase superfamily. CAMK Ser/Thr protein kinase family. NIM1 subfamily. Interacts (phosphorylated by ATR) with RAD51. Interacts with and phosphorylates CLSPN, an adapter protein that regulates the ATR-dependent phosphorylation of CHEK1. Interacts with BRCA1. Interacts with and phosphorylates CDC25A, CDC25B and CDC25C. Interacts with FBXO6, which regulates CHEK1. Interacts with PPM1D, which regulates CHEK1 through dephosphorylation. Interacts with TIMELESS; DNA damage-dependent. Interacts with FEM1B; activates CHEK1 in response to stress. Interacts with TLK1. Interacts with XPO1 and YWHAZ. Interacts with CDK5RAP3; antagonizes CHEK1. In terms of processing, phosphorylated by ATR in a RAD17-dependent manner in response to ultraviolet irradiation and inhibition of DNA replication. Phosphorylated by ATM in response to ionizing irradiation. ATM and ATR can both phosphorylate Ser-317 and Ser-345 and this results in enhanced kinase activity. Phosphorylation at Ser-345 induces a change in the conformation of the protein, activates the kinase activity and is a prerequisite for interaction with FBXO6 and subsequent ubiquitination at Lys-436. Phosphorylation at Ser-345 also increases binding to 14-3-3 proteins and promotes nuclear retention. Conversely, dephosphorylation at Ser-345 by PPM1D may contribute to exit from checkpoint mediated cell cycle arrest. Phosphorylation at Ser-280 by AKT1/PKB, may promote mono and/or diubiquitination. Also phosphorylated at undefined residues during mitotic arrest, resulting in decreased activity. Ubiquitinated. Mono or diubiquitination promotes nuclear exclusion. The activated form (phosphorylated on Ser-345) is polyubiquitinated at Lys-436 by some SCF-type E3 ubiquitin ligase complex containing FBXO6 promoting its degradation. Ubiquitination and degradation are required to terminate the checkpoint and ensure that activated CHEK1 does not accumulate as cells progress through S phase, when replication forks encounter transient impediments during normal DNA replication. 'Lys-63'-mediated ubiquitination by TRAF4 at Lys-132 activates cell cycle arrest and activation of DNA repair. Post-translationally, proteolytically cleaved at the C-terminus by SPRTN during normal DNA replication, thereby promoting CHEK1 removal from chromatin and activating the protein kinase activity. As to expression, expressed in brain, heart, liver, lung, skeletal muscle, spleen and testis. In terms of tissue distribution, expressed only in liver.

It localises to the nucleus. The protein resides in the chromosome. It is found in the cytoplasm. Its subcellular location is the cytoskeleton. The protein localises to the microtubule organizing center. It localises to the centrosome. It carries out the reaction L-seryl-[protein] + ATP = O-phospho-L-seryl-[protein] + ADP + H(+). The enzyme catalyses L-threonyl-[protein] + ATP = O-phospho-L-threonyl-[protein] + ADP + H(+). Activated through phosphorylation predominantly by ATR but also by ATM in response to DNA damage or inhibition of DNA replication. Activation is modulated by several mediators including CLSPN, BRCA1 and FEM1B. Proteolytic cleavage at the C-terminus by SPRTN during normal DNA replication activates the protein kinase activity. Its function is as follows. Serine/threonine-protein kinase which is required for checkpoint-mediated cell cycle arrest and activation of DNA repair in response to the presence of DNA damage or unreplicated DNA. May also negatively regulate cell cycle progression during unperturbed cell cycles. This regulation is achieved by a number of mechanisms that together help to preserve the integrity of the genome. Recognizes the substrate consensus sequence [R-X-X-S/T]. Binds to and phosphorylates CDC25A, CDC25B and CDC25C. Phosphorylation of CDC25A at 'Ser-178' and 'Thr-507' and phosphorylation of CDC25C at 'Ser-216' creates binding sites for 14-3-3 proteins which inhibit CDC25A and CDC25C. Phosphorylation of CDC25A at 'Ser-76', 'Ser-124', 'Ser-178', 'Ser-279' and 'Ser-293' promotes proteolysis of CDC25A. Phosphorylation of CDC25A at 'Ser-76' primes the protein for subsequent phosphorylation at 'Ser-79', 'Ser-82' and 'Ser-88' by NEK11, which is required for polyubiquitination and degradation of CDCD25A. Inhibition of CDC25 leads to increased inhibitory tyrosine phosphorylation of CDK-cyclin complexes and blocks cell cycle progression. Also phosphorylates NEK6. Binds to and phosphorylates RAD51 at 'Thr-309', which promotes the release of RAD51 from BRCA2 and enhances the association of RAD51 with chromatin, thereby promoting DNA repair by homologous recombination. Phosphorylates multiple sites within the C-terminus of TP53, which promotes activation of TP53 by acetylation and promotes cell cycle arrest and suppression of cellular proliferation. Also promotes repair of DNA cross-links through phosphorylation of FANCE. Binds to and phosphorylates TLK1 at 'Ser-743', which prevents the TLK1-dependent phosphorylation of the chromatin assembly factor ASF1A. This may enhance chromatin assembly both in the presence or absence of DNA damage. May also play a role in replication fork maintenance through regulation of PCNA. May regulate the transcription of genes that regulate cell-cycle progression through the phosphorylation of histones. Phosphorylates histone H3.1 (to form H3T11ph), which leads to epigenetic inhibition of a subset of genes. May also phosphorylate RB1 to promote its interaction with the E2F family of transcription factors and subsequent cell cycle arrest. Phosphorylates SPRTN, promoting SPRTN recruitment to chromatin. Reduces replication stress and activates the G2/M checkpoint, by phosphorylating and inactivating PABIR1/FAM122A and promoting the serine/threonine-protein phosphatase 2A-mediated dephosphorylation and stabilization of WEE1 levels and activity. The chain is Serine/threonine-protein kinase Chk1 (Chek1) from Rattus norvegicus (Rat).